Consider the following 177-residue polypeptide: Peptide methionine sulfoxide reductase MsrA (177 aa).

Cys11 is an active-site residue.

It belongs to the MsrA Met sulfoxide reductase family.

It carries out the reaction L-methionyl-[protein] + [thioredoxin]-disulfide + H2O = L-methionyl-(S)-S-oxide-[protein] + [thioredoxin]-dithiol. The enzyme catalyses [thioredoxin]-disulfide + L-methionine + H2O = L-methionine (S)-S-oxide + [thioredoxin]-dithiol. In terms of biological role, has an important function as a repair enzyme for proteins that have been inactivated by oxidation. Catalyzes the reversible oxidation-reduction of methionine sulfoxide in proteins to methionine. This is Peptide methionine sulfoxide reductase MsrA from Trichodesmium erythraeum (strain IMS101).